A 217-amino-acid chain; its full sequence is Oxygen-evolving enhancer protein 3, chloroplastic (217 aa).

Disordered stretches follow at residues 1-25 (MAQA…RRAG) and 73-95 (PIKL…SDQA). A chloroplast-targeting transit peptide spans 1-63 (MAQAMASMTG…ATGIAGGALA (63 aa)).

This sequence belongs to the PsbQ family.

It localises to the plastid. The protein resides in the chloroplast thylakoid membrane. The polypeptide is Oxygen-evolving enhancer protein 3, chloroplastic (Oryza sativa subsp. indica (Rice)).